The sequence spans 285 residues: Putative lipoprotein SCO4650 (285 aa).

The N-terminal stretch at 1–20 (MTGTTARRTVVSVAVSAALA) is a signal peptide. Cys-21 carries N-palmitoyl cysteine lipidation. Cys-21 is lipidated: S-diacylglycerol cysteine. The segment at 27-63 (GPGGSDDAGHSTGPTGSARPSASAPASSRAPALTGPS) is disordered. The segment covering 43–58 (SARPSASAPASSRAPA) has biased composition (low complexity).

The protein localises to the cell membrane. This chain is Putative lipoprotein SCO4650, found in Streptomyces coelicolor (strain ATCC BAA-471 / A3(2) / M145).